The following is a 179-amino-acid chain: ATP-dependent protease subunit HslV (179 aa).

The active site involves Thr7. Na(+) is bound by residues Gly162, Cys165, and Thr168.

This sequence belongs to the peptidase T1B family. HslV subfamily. A double ring-shaped homohexamer of HslV is capped on each side by a ring-shaped HslU homohexamer. The assembly of the HslU/HslV complex is dependent on binding of ATP.

The protein resides in the cytoplasm. The catalysed reaction is ATP-dependent cleavage of peptide bonds with broad specificity.. With respect to regulation, allosterically activated by HslU binding. Its function is as follows. Protease subunit of a proteasome-like degradation complex believed to be a general protein degrading machinery. This chain is ATP-dependent protease subunit HslV, found in Bordetella avium (strain 197N).